The primary structure comprises 342 residues: Ferredoxin--NADP reductase (342 aa).

Residues Cys17, Asp36, Gln44, Tyr49, Val89, Phe124, Asp289, and Thr330 each coordinate FAD.

Belongs to the ferredoxin--NADP reductase type 2 family. As to quaternary structure, homodimer. It depends on FAD as a cofactor.

The catalysed reaction is 2 reduced [2Fe-2S]-[ferredoxin] + NADP(+) + H(+) = 2 oxidized [2Fe-2S]-[ferredoxin] + NADPH. This is Ferredoxin--NADP reductase from Nitrobacter winogradskyi (strain ATCC 25391 / DSM 10237 / CIP 104748 / NCIMB 11846 / Nb-255).